The sequence spans 184 residues: UPF0149 protein PSEEN5316 (184 aa).

The protein belongs to the UPF0149 family.

The chain is UPF0149 protein PSEEN5316 from Pseudomonas entomophila (strain L48).